Here is a 251-residue protein sequence, read N- to C-terminus: Ubiquinone/menaquinone biosynthesis C-methyltransferase UbiE (251 aa).

Residues Thr-74, Asp-95, 123-124, and Ser-140 each bind S-adenosyl-L-methionine; that span reads NA.

Belongs to the class I-like SAM-binding methyltransferase superfamily. MenG/UbiE family.

The catalysed reaction is a 2-demethylmenaquinol + S-adenosyl-L-methionine = a menaquinol + S-adenosyl-L-homocysteine + H(+). It carries out the reaction a 2-methoxy-6-(all-trans-polyprenyl)benzene-1,4-diol + S-adenosyl-L-methionine = a 5-methoxy-2-methyl-3-(all-trans-polyprenyl)benzene-1,4-diol + S-adenosyl-L-homocysteine + H(+). Its pathway is quinol/quinone metabolism; menaquinone biosynthesis; menaquinol from 1,4-dihydroxy-2-naphthoate: step 2/2. It participates in cofactor biosynthesis; ubiquinone biosynthesis. Its function is as follows. Methyltransferase required for the conversion of demethylmenaquinol (DMKH2) to menaquinol (MKH2) and the conversion of 2-polyprenyl-6-methoxy-1,4-benzoquinol (DDMQH2) to 2-polyprenyl-3-methyl-6-methoxy-1,4-benzoquinol (DMQH2). In Citrobacter koseri (strain ATCC BAA-895 / CDC 4225-83 / SGSC4696), this protein is Ubiquinone/menaquinone biosynthesis C-methyltransferase UbiE.